The following is a 657-amino-acid chain: DNA mismatch repair protein MutL (657 aa).

This sequence belongs to the DNA mismatch repair MutL/HexB family.

In terms of biological role, this protein is involved in the repair of mismatches in DNA. It is required for dam-dependent methyl-directed DNA mismatch repair. May act as a 'molecular matchmaker', a protein that promotes the formation of a stable complex between two or more DNA-binding proteins in an ATP-dependent manner without itself being part of a final effector complex. The protein is DNA mismatch repair protein MutL of Streptococcus agalactiae serotype III (strain NEM316).